The chain runs to 571 residues: Proline--tRNA ligase 1 (571 aa).

Belongs to the class-II aminoacyl-tRNA synthetase family. ProS type 1 subfamily. Homodimer.

The protein localises to the cytoplasm. It catalyses the reaction tRNA(Pro) + L-proline + ATP = L-prolyl-tRNA(Pro) + AMP + diphosphate. Functionally, catalyzes the attachment of proline to tRNA(Pro) in a two-step reaction: proline is first activated by ATP to form Pro-AMP and then transferred to the acceptor end of tRNA(Pro). As ProRS can inadvertently accommodate and process non-cognate amino acids such as alanine and cysteine, to avoid such errors it has two additional distinct editing activities against alanine. One activity is designated as 'pretransfer' editing and involves the tRNA(Pro)-independent hydrolysis of activated Ala-AMP. The other activity is designated 'posttransfer' editing and involves deacylation of mischarged Ala-tRNA(Pro). The misacylated Cys-tRNA(Pro) is not edited by ProRS. The protein is Proline--tRNA ligase 1 of Clostridioides difficile (strain 630) (Peptoclostridium difficile).